The following is a 569-amino-acid chain: MATKGLNMDDLDLLLADLGRPKSSIKVTATVQTTATPSSGKNFDNSDIQNEIQSIIEELDQQPQTVQTISTPAPKNHNTTTTTASFSVSSQPAPQPPQQSQQIDGLDDLDELMESLNTSISTALKAVPTTPEEHITHANSNSPPPSLHKNTSSTNSASSLSRPNNNPSVVSTPQPGKVTSTATITTKKQPALSKATLETTSGNNVYSSQPSQSQPQPYKVTATNSQPSSDDLDELLKGLSPSTTTTTTVPPPVQRDQHQHHHQHQHHHHHNPNHNQTQTVTTQINIGRTNTPNNNNNNNTNSPKVVHGDDLDNLLNNLTSQVKDIDSTGPTSRGTCGGCRKPIFGETIQAMGKFYHPEHFCCHNCQNPLGTKNYYEQESLPHCEKCYQELFCARCAHCDEPISDRCITALGKKWHVHHFVCTQCLKPFEGGNFFERDGRPYCEADFYSTFAVRCGGCNSPIRGECINALGTQWHPEHFVCQYCQKSFTNGQFFEFGGKPYCDVHYHQQAGSVCSGCGKAVSGRCVDALDKKWHPEHFVCAFCMNPLAGGSYTANNGKPYCKGCHNKLFA.

An LD motif 1 motif is present at residues 10–18; that stretch reads DLDLLLADL. The segment covering 62–78 has biased composition (polar residues); that stretch reads QPQTVQTISTPAPKNHN. Positions 62-103 are disordered; that stretch reads QPQTVQTISTPAPKNHNTTTTTASFSVSSQPAPQPPQQSQQI. Low complexity predominate over residues 79 to 102; sequence TTTTTASFSVSSQPAPQPPQQSQQ. An LD motif 2 motif is present at residues 106–112; the sequence is LDDLDEL. The disordered stretch occupies residues 129–311; that stretch reads TTPEEHITHA…SPKVVHGDDL (183 aa). The segment covering 150–161 has biased composition (low complexity); it reads NTSSTNSASSLS. 2 stretches are compositionally biased toward polar residues: residues 162–188 and 196–206; these read RPNN…TTKK and TLETTSGNNVY. Low complexity predominate over residues 207–217; it reads SSQPSQSQPQP. The LD motif 3 motif lies at 232 to 239; that stretch reads LDELLKGL. Positions 258 to 272 are enriched in basic residues; it reads HQHHHQHQHHHHHNP. The segment covering 273–301 has biased composition (low complexity); that stretch reads NHNQTQTVTTQINIGRTNTPNNNNNNNTN. The short motif at 311–318 is the LD motif 4 element; that stretch reads LDNLLNNL. 4 LIM zinc-binding domains span residues 334–391, 393–452, 453–510, and 511–569; these read GTCG…QELF, ARCA…TFAV, RCGG…QQAG, and SVCS…KLFA.

It belongs to the paxillin family. In terms of tissue distribution, expressed in the upper and lower cup of the fruiting body.

It is found in the cytoplasm. Its subcellular location is the cell cortex. The protein resides in the cell projection. It localises to the filopodium. The protein localises to the cell junction. It is found in the focal adhesion. Its subcellular location is the cytoskeleton. Functionally, required for cell-substrate adhesion, cell sorting, slug migration, and cell differentiation. May function upstream of limB. The sequence is that of Paxillin-B (paxB) from Dictyostelium discoideum (Social amoeba).